The sequence spans 328 residues: UPF0421 protein SAV1889 (328 aa).

4 helical membrane-spanning segments follow: residues 19–39 (IAIFLTAVFCMALDLTPIYAI), 61–81 (LPATVIGAGFAVLFTYLFGDQ), 108–128 (VAVLTSLAMIPGIHDAYIFNF), and 132–152 (TLTAIIGLVTSGLINFMVFPP).

This sequence belongs to the UPF0421 family.

It is found in the cell membrane. In Staphylococcus aureus (strain Mu50 / ATCC 700699), this protein is UPF0421 protein SAV1889.